The sequence spans 209 residues: Ribosomal RNA large subunit methyltransferase E (209 aa).

Positions 63, 65, 83, 99, and 124 each coordinate S-adenosyl-L-methionine. Catalysis depends on Lys-164, which acts as the Proton acceptor.

Belongs to the class I-like SAM-binding methyltransferase superfamily. RNA methyltransferase RlmE family.

It localises to the cytoplasm. It carries out the reaction uridine(2552) in 23S rRNA + S-adenosyl-L-methionine = 2'-O-methyluridine(2552) in 23S rRNA + S-adenosyl-L-homocysteine + H(+). Its function is as follows. Specifically methylates the uridine in position 2552 of 23S rRNA at the 2'-O position of the ribose in the fully assembled 50S ribosomal subunit. This is Ribosomal RNA large subunit methyltransferase E from Baumannia cicadellinicola subsp. Homalodisca coagulata.